Here is a 95-residue protein sequence, read N- to C-terminus: Large ribosomal subunit protein uL23 (95 aa).

This sequence belongs to the universal ribosomal protein uL23 family. In terms of assembly, part of the 50S ribosomal subunit. Contacts protein L29, and trigger factor when it is bound to the ribosome.

In terms of biological role, one of the early assembly proteins it binds 23S rRNA. One of the proteins that surrounds the polypeptide exit tunnel on the outside of the ribosome. Forms the main docking site for trigger factor binding to the ribosome. The protein is Large ribosomal subunit protein uL23 of Solibacter usitatus (strain Ellin6076).